The primary structure comprises 255 residues: Thiazole synthase (255 aa).

Residue Lys-96 is the Schiff-base intermediate with DXP of the active site. 1-deoxy-D-xylulose 5-phosphate is bound by residues Gly-157, 183–184 (AG), and 205–206 (NT).

It belongs to the ThiG family. In terms of assembly, homotetramer. Forms heterodimers with either ThiH or ThiS.

The protein localises to the cytoplasm. It catalyses the reaction [ThiS sulfur-carrier protein]-C-terminal-Gly-aminoethanethioate + 2-iminoacetate + 1-deoxy-D-xylulose 5-phosphate = [ThiS sulfur-carrier protein]-C-terminal Gly-Gly + 2-[(2R,5Z)-2-carboxy-4-methylthiazol-5(2H)-ylidene]ethyl phosphate + 2 H2O + H(+). It participates in cofactor biosynthesis; thiamine diphosphate biosynthesis. Functionally, catalyzes the rearrangement of 1-deoxy-D-xylulose 5-phosphate (DXP) to produce the thiazole phosphate moiety of thiamine. Sulfur is provided by the thiocarboxylate moiety of the carrier protein ThiS. In vitro, sulfur can be provided by H(2)S. This is Thiazole synthase from Staphylococcus saprophyticus subsp. saprophyticus (strain ATCC 15305 / DSM 20229 / NCIMB 8711 / NCTC 7292 / S-41).